The sequence spans 543 residues: MSWGTELWDQFDNLEKHTQWGIDFLDKYAKFVKERLEIEQNYAKQLRNLVKKFCPKRSAKDEEPRFTSCLSFYNILNELNDYAGQREVVAEEIGHRVYAEIMRYSNDIKGERKSHLHEGRKAQQYLDMCLKQMDNSKRKFERECREAEKAQQSYERLDNDTNATKSDVEKAKQQLHLRTHMADESKNEYAAQLQNYNAEQHKHFYIVIPQVYKHLQEMDERRTIKLSECYKGFADAERKVIPIISKCLEGMVQAAKSVDERRDSQIVVDCFKSGFEPPGDFPFEDYSQHIYRTVSDGTISTPKQESLKPDPRMTVGKAKGKLWLFGKKPKGPALEDFSHLPPEQRRKRLQQRIDELSRELQKEMDQKDALNKMKDVYEKNPQMGDPGSLHPKIAETTSNIERLRMEIHKNEGWLSEVEGKVSQRSERRHSAEANHLVAQGRESPEGSYTEDANQEGRVQPQHHAHPEFDDEFDDDEPLPAIGHCKSLYPFDGNNEGTLAMKEGEVLYIIEEDKGDGWTRARKQNGEEGYVPTSYIEITLEKKQ.

The 263-residue stretch at 1 to 263 (MSWGTELWDQ…AAKSVDERRD (263 aa)) folds into the F-BAR domain. Coiled coils occupy residues 66-258 (FTSC…AKSV) and 334-426 (LEDF…QRSE). Positions 339-416 (HLPPEQRRKR…IHKNEGWLSE (78 aa)) constitute an REM-1 domain. A disordered region spans residues 424–467 (RSERRHSAEANHLVAQGRESPEGSYTEDANQEGRVQPQHHAHPE). One can recognise an SH3 domain in the interval 479–540 (PAIGHCKSLY…PTSYIEITLE (62 aa)).

It belongs to the FNBP1 family. In terms of assembly, homodimerizes, the dimers can polymerize end-to-end to form filamentous structures. Interacts with GTP-bound cdc42 and wasl/n-wasp.

Its subcellular location is the cytoplasm. The protein resides in the cytoskeleton. The protein localises to the cell cortex. It localises to the cytoplasmic vesicle. It is found in the cell membrane. Functionally, required to coordinate membrane tubulation with reorganization of the actin cytoskeleton during endocytosis. Essential for autophagy of intracellular bacterial pathogens. Promotes cdc42-induced actin polymerization by activating the wasl-waspip complex, the predominant form of wasl/n-wasp in cells. The chain is Formin-binding protein 1-like (fnbp1l) from Xenopus laevis (African clawed frog).